Consider the following 104-residue polypeptide: Thioredoxin (104 aa).

Residues 2–104 (AIVKVTDSNF…NLAEVIEKHL (103 aa)) enclose the Thioredoxin domain. The cysteines at positions 29 and 32 are disulfide-linked.

The protein belongs to the thioredoxin family.

Functionally, component of the thioredoxin-thioredoxin reductase system. Participates in various redox reactions through the reversible oxidation of its active center dithiol to a disulfide and catalyzes dithiol-disulfide exchange reactions. The polypeptide is Thioredoxin (trxA) (Staphylococcus saprophyticus subsp. saprophyticus (strain ATCC 15305 / DSM 20229 / NCIMB 8711 / NCTC 7292 / S-41)).